Reading from the N-terminus, the 114-residue chain is Large ribosomal subunit protein bL17 (114 aa).

This sequence belongs to the bacterial ribosomal protein bL17 family. Part of the 50S ribosomal subunit. Contacts protein L32.

The sequence is that of Large ribosomal subunit protein bL17 from Halothermothrix orenii (strain H 168 / OCM 544 / DSM 9562).